Reading from the N-terminus, the 406-residue chain is MKRAIILVLDSFGIGAAGDAEKFGDVGSDTMGHIAEQCDKGLADNGNRKGPLTLPNLSKLGLAMAGKESTGKLAAGLDADAEIIGAYGHAAELSSGKDTPSGHWEIAGVPVLFDWGYFSDKENSFPKELTDRILARANLSGYLGNCHASGTQVLDDLGEEHMKTGMPIFYTSADSVFQIACHEETFGLDNLLTLCQIAREELEDYNIGRVIARPFIGAGKGQFERTGNRRDLSLEPPAITVLQKLVEEKNGHVHSIGKISDIYAGCGITQKTKATGIPALFDATKEAITAASDNTIVFTNFVDFDSAYGHRRDVAGYAAALEYFDGRLPEIMEMLQEDDILILTADHGCDPTWPGTDHTREHIPVLVYGHKVPAGSLGLRDTFADIGQTLAEYFEISDMEYGKSFL.

6 residues coordinate Mn(2+): Asp10, Asp305, His310, Asp346, His347, and His358.

It belongs to the phosphopentomutase family. Mn(2+) serves as cofactor.

It is found in the cytoplasm. It catalyses the reaction 2-deoxy-alpha-D-ribose 1-phosphate = 2-deoxy-D-ribose 5-phosphate. The enzyme catalyses alpha-D-ribose 1-phosphate = D-ribose 5-phosphate. It functions in the pathway carbohydrate degradation; 2-deoxy-D-ribose 1-phosphate degradation; D-glyceraldehyde 3-phosphate and acetaldehyde from 2-deoxy-alpha-D-ribose 1-phosphate: step 1/2. Its function is as follows. Isomerase that catalyzes the conversion of deoxy-ribose 1-phosphate (dRib-1-P) and ribose 1-phosphate (Rib-1-P) to deoxy-ribose 5-phosphate (dRib-5-P) and ribose 5-phosphate (Rib-5-P), respectively. The sequence is that of Phosphopentomutase from Aliivibrio salmonicida (strain LFI1238) (Vibrio salmonicida (strain LFI1238)).